The following is a 65-amino-acid chain: Small ribosomal subunit protein bS21 (65 aa).

It belongs to the bacterial ribosomal protein bS21 family.

The protein is Small ribosomal subunit protein bS21 of Trichlorobacter lovleyi (strain ATCC BAA-1151 / DSM 17278 / SZ) (Geobacter lovleyi).